The following is a 133-amino-acid chain: MVEWHKIIEDISKNNKFEDAAIVDYKTTKNVLAAIPNRTFAKINPGEVIPLITNHNILKPLIGQKFCIVYTNSLMDENTYAMELLTGYAPVSPIVIARTHTALIFLMGKPTTSRRDVYRTCRDHATRVRATGN.

This sequence belongs to the profilin family.

In terms of biological role, more likely to influence phosphoinositide metabolism than actin assembly. The sequence is that of Profilin from Camelus.